The sequence spans 226 residues: MAQAGVSLPKLVIGEVTFPPAAAPPGSSSSLFLAGAGERGLEIDRQFVVFTAIGVYLEDLAVSTLGPKWKGKTADDLAGNSDFFRDIFTGPFEKFTRITMVKPLSGQQYSEKVEENCVAHWKAAGTYTEAEAAAVEKFKEACKNETFPPGTSILFTHQVSPASLTITFWREGSMPETGNTVIESKALSEAILESIIGKHGVSPGAKRSVAQRLSEILEEVKLEGSK.

Substrate-binding residues include Thr-51, Asn-116, and Ser-194.

Belongs to the chalcone isomerase family.

The catalysed reaction is a chalcone = a flavanone.. Its pathway is secondary metabolite biosynthesis; flavonoid biosynthesis. In terms of biological role, catalyzes the intramolecular cyclization of bicyclic chalcones into tricyclic (S)-flavanones. Responsible for the isomerization of 4,2',4',6'-tetrahydroxychalcone (also termed chalcone) into naringenin. The protein is Chalcone--flavanone isomerase (CHI) of Canna generalis (Canna lily).